The primary structure comprises 166 residues: 2-C-methyl-D-erythritol 2,4-cyclodiphosphate synthase (166 aa).

2 residues coordinate a divalent metal cation: D11 and H13. Residues 11-13 and 40-41 contribute to the 4-CDP-2-C-methyl-D-erythritol 2-phosphate site; these read DVH and HS. An a divalent metal cation-binding site is contributed by H48. Residues 62–64, 135–138, F142, and R145 contribute to the 4-CDP-2-C-methyl-D-erythritol 2-phosphate site; these read DLG and TTSD.

The protein belongs to the IspF family. As to quaternary structure, homotrimer. It depends on a divalent metal cation as a cofactor.

It carries out the reaction 4-CDP-2-C-methyl-D-erythritol 2-phosphate = 2-C-methyl-D-erythritol 2,4-cyclic diphosphate + CMP. The protein operates within isoprenoid biosynthesis; isopentenyl diphosphate biosynthesis via DXP pathway; isopentenyl diphosphate from 1-deoxy-D-xylulose 5-phosphate: step 4/6. Functionally, involved in the biosynthesis of isopentenyl diphosphate (IPP) and dimethylallyl diphosphate (DMAPP), two major building blocks of isoprenoid compounds. Catalyzes the conversion of 4-diphosphocytidyl-2-C-methyl-D-erythritol 2-phosphate (CDP-ME2P) to 2-C-methyl-D-erythritol 2,4-cyclodiphosphate (ME-CPP) with a corresponding release of cytidine 5-monophosphate (CMP). The sequence is that of 2-C-methyl-D-erythritol 2,4-cyclodiphosphate synthase from Pseudarthrobacter chlorophenolicus (strain ATCC 700700 / DSM 12829 / CIP 107037 / JCM 12360 / KCTC 9906 / NCIMB 13794 / A6) (Arthrobacter chlorophenolicus).